The primary structure comprises 340 residues: Phosphoribosylformylglycinamidine cyclo-ligase (340 aa).

It belongs to the AIR synthase family.

The protein resides in the cytoplasm. The enzyme catalyses 2-formamido-N(1)-(5-O-phospho-beta-D-ribosyl)acetamidine + ATP = 5-amino-1-(5-phospho-beta-D-ribosyl)imidazole + ADP + phosphate + H(+). The protein operates within purine metabolism; IMP biosynthesis via de novo pathway; 5-amino-1-(5-phospho-D-ribosyl)imidazole from N(2)-formyl-N(1)-(5-phospho-D-ribosyl)glycinamide: step 2/2. This Streptococcus pneumoniae serotype 19F (strain G54) protein is Phosphoribosylformylglycinamidine cyclo-ligase.